The sequence spans 191 residues: Transcription factor FapR (191 aa).

The 68-residue stretch at 102–169 folds into the MaoC-like domain; the sequence is GIARGHHLFA…RILVTSHVNQ (68 aa).

The protein belongs to the FapR family.

Its function is as follows. Transcriptional factor involved in regulation of membrane lipid biosynthesis by repressing genes involved in fatty acid and phospholipid metabolism. This is Transcription factor FapR from Shouchella clausii (strain KSM-K16) (Alkalihalobacillus clausii).